A 1353-amino-acid polypeptide reads, in one-letter code: ABC-type transporter MYCGRDRAFT_41235 (1353 aa).

A helical membrane pass occupies residues 40–60; sequence ASASLWNWFFFSWLNPLIAIG. An N-linked (GlcNAc...) asparagine glycan is attached at N121. 6 helical membrane-spanning segments follow: residues 124–144, 172–192, 250–270, 271–291, 364–384, and 397–417; these read VLVW…ATIT, IGQG…GVMA, FACG…ICLG, LTIA…AILV, VALS…TYAA, and ALTL…AFGA. Residues 129–420 enclose the ABC transmembrane type-1 1 domain; sequence WVGGAMKLFA…LPVAFGAAAD (292 aa). In terms of domain architecture, ABC transporter 1 spans 460–684; sequence YRVQDHSDEK…EGGQMRRVVE (225 aa). N-linked (GlcNAc...) asparagine glycosylation occurs at N481. Position 496–503 (496–503) interacts with ATP; the sequence is GPVGAGKS. The disordered stretch occupies residues 687–720; the sequence is ASKSSAEEEEVEDGDLKDGVPSTDGGDASQTTSN. A run of 6 helical transmembrane segments spans residues 748–768, 796–816, 864–882, 888–907, 973–993, and 1002–1022; these read PAFT…GSIL, LGVS…FFIF, AFRM…VVLI, WFLL…GMYY, LSVR…LIVV, and AQGG…GFMI. An ABC transmembrane type-1 2 domain is found at 756 to 1030; sequence ILSMLIFQGG…MIRQSAEIEN (275 aa). The region spanning 1070-1334 is the ABC transporter 2 domain; the sequence is IEMRDVVFTH…EGGHFRSLCS (265 aa). Residue 1104-1111 coordinates ATP; sequence GRTGSGKS. The segment covering 1191 to 1200 has biased composition (polar residues); that stretch reads QSSAETLTSS. The disordered stretch occupies residues 1191–1223; the sequence is QSSAETLTSSDQEKSSPDDAAISPSSHSHSQHL. Over residues 1208 to 1218 the composition is skewed to low complexity; that stretch reads DDAAISPSSHS.

It belongs to the ABC transporter superfamily. ABCC family. Conjugate transporter (TC 3.A.1.208) subfamily.

It is found in the cell membrane. In terms of biological role, multidrug resistance protein; part of the gene cluster 14 that mediates the biosynthesis of a ferrichrome A-like siderophors which may contribute to organismal virulence. This Zymoseptoria tritici (strain CBS 115943 / IPO323) (Speckled leaf blotch fungus) protein is ABC-type transporter MYCGRDRAFT_41235.